Consider the following 69-residue polypeptide: uncharacterized protein (69 aa).

The signal sequence occupies residues 1–19; the sequence is MKRIWVSLMIAITACSAHA.

This is an uncharacterized protein from Pasteurella multocida (strain Pm70).